The chain runs to 350 residues: Methylthioribose-1-phosphate isomerase (350 aa).

Residues 47–49, arginine 90, and glutamine 197 contribute to the substrate site; that span reads RGA. The Proton donor role is filled by aspartate 238. Substrate is bound at residue 248 to 249; sequence NK.

Belongs to the eIF-2B alpha/beta/delta subunits family. MtnA subfamily.

The enzyme catalyses 5-(methylsulfanyl)-alpha-D-ribose 1-phosphate = 5-(methylsulfanyl)-D-ribulose 1-phosphate. Its pathway is amino-acid biosynthesis; L-methionine biosynthesis via salvage pathway; L-methionine from S-methyl-5-thio-alpha-D-ribose 1-phosphate: step 1/6. Its function is as follows. Catalyzes the interconversion of methylthioribose-1-phosphate (MTR-1-P) into methylthioribulose-1-phosphate (MTRu-1-P). This chain is Methylthioribose-1-phosphate isomerase, found in Nitratidesulfovibrio vulgaris (strain DP4) (Desulfovibrio vulgaris).